We begin with the raw amino-acid sequence, 134 residues long: Small ribosomal subunit protein uS11 (134 aa).

The segment at 114 to 134 (SISDVTPQPHNGCRPPKRRRV) is disordered.

This sequence belongs to the universal ribosomal protein uS11 family. As to quaternary structure, part of the 30S ribosomal subunit. Interacts with proteins S7 and S18. Binds to IF-3.

Its function is as follows. Located on the platform of the 30S subunit, it bridges several disparate RNA helices of the 16S rRNA. Forms part of the Shine-Dalgarno cleft in the 70S ribosome. The protein is Small ribosomal subunit protein uS11 of Corynebacterium efficiens (strain DSM 44549 / YS-314 / AJ 12310 / JCM 11189 / NBRC 100395).